Here is a 390-residue protein sequence, read N- to C-terminus: Anhydro-N-acetylmuramic acid kinase (390 aa).

9 to 16 is a binding site for ATP; sequence GTSLDGID.

Belongs to the anhydro-N-acetylmuramic acid kinase family.

It carries out the reaction 1,6-anhydro-N-acetyl-beta-muramate + ATP + H2O = N-acetyl-D-muramate 6-phosphate + ADP + H(+). Its pathway is amino-sugar metabolism; 1,6-anhydro-N-acetylmuramate degradation. It functions in the pathway cell wall biogenesis; peptidoglycan recycling. In terms of biological role, catalyzes the specific phosphorylation of 1,6-anhydro-N-acetylmuramic acid (anhMurNAc) with the simultaneous cleavage of the 1,6-anhydro ring, generating MurNAc-6-P. Is required for the utilization of anhMurNAc either imported from the medium or derived from its own cell wall murein, and thus plays a role in cell wall recycling. In Bacillus cereus (strain ATCC 14579 / DSM 31 / CCUG 7414 / JCM 2152 / NBRC 15305 / NCIMB 9373 / NCTC 2599 / NRRL B-3711), this protein is Anhydro-N-acetylmuramic acid kinase.